The sequence spans 903 residues: Dual 3',5'-cyclic-AMP and -GMP phosphodiesterase 11A (903 aa).

GAF domains are found at residues 175–324 (DLTS…GIAI) and 356–512 (DLEK…GLGI). Ser378 is a binding site for 3',5'-cyclic GMP. The 325-residue stretch at 542–866 (SKTEVDKFKA…VKWEELDKKR (325 aa)) folds into the PDEase domain. Catalysis depends on His618, which acts as the Proton donor. The a divalent metal cation site is built by His622, His658, Asp659, and Asp770. Positions 863-903 (DKKRQHDHGASVPASPCSAAEGSETGGVPCCSNNTPPTHVS) are disordered. The span at 893–903 (CSNNTPPTHVS) shows a compositional bias: polar residues.

The protein belongs to the cyclic nucleotide phosphodiesterase family. A divalent metal cation serves as cofactor.

It is found in the cytoplasm. The protein resides in the cytosol. The enzyme catalyses 3',5'-cyclic GMP + H2O = GMP + H(+). It catalyses the reaction 3',5'-cyclic AMP + H2O = AMP + H(+). Plays a role in signal transduction by regulating the intracellular concentration of cyclic nucleotides cAMP and cGMP. Catalyzes the hydrolysis of both cAMP and cGMP to 5'-AMP and 5'-GMP, respectively. The polypeptide is Dual 3',5'-cyclic-AMP and -GMP phosphodiesterase 11A (pde11a) (Takifugu rubripes (Japanese pufferfish)).